The following is a 242-amino-acid chain: Methylthioribulose-1-phosphate dehydratase (242 aa).

The segment at 1 to 22 is disordered; it reads MAAASGHGLELANGGDATQDKL. Cysteine 97 lines the substrate pocket. Zn(2+) contacts are provided by histidine 115 and histidine 117. Glutamate 139 functions as the Proton donor/acceptor in the catalytic mechanism. Histidine 195 lines the Zn(2+) pocket.

The protein belongs to the aldolase class II family. MtnB subfamily. Requires Zn(2+) as cofactor.

It localises to the cytoplasm. It catalyses the reaction 5-(methylsulfanyl)-D-ribulose 1-phosphate = 5-methylsulfanyl-2,3-dioxopentyl phosphate + H2O. It participates in amino-acid biosynthesis; L-methionine biosynthesis via salvage pathway; L-methionine from S-methyl-5-thio-alpha-D-ribose 1-phosphate: step 2/6. Its function is as follows. Catalyzes the dehydration of methylthioribulose-1-phosphate (MTRu-1-P) into 2,3-diketo-5-methylthiopentyl-1-phosphate (DK-MTP-1-P). Functions in the methionine salvage pathway. May play a role in apoptosis. This Gallus gallus (Chicken) protein is Methylthioribulose-1-phosphate dehydratase.